Here is an 81-residue protein sequence, read N- to C-terminus: uncharacterized protein (81 aa).

The segment at Gly-11–Gly-34 is disordered.

This is an uncharacterized protein from Dictyostelium discoideum (Social amoeba).